The chain runs to 229 residues: Putative N-acetylmannosamine-6-phosphate 2-epimerase (229 aa).

This sequence belongs to the NanE family.

It catalyses the reaction an N-acyl-D-glucosamine 6-phosphate = an N-acyl-D-mannosamine 6-phosphate. Its pathway is amino-sugar metabolism; N-acetylneuraminate degradation; D-fructose 6-phosphate from N-acetylneuraminate: step 3/5. Its function is as follows. Converts N-acetylmannosamine-6-phosphate (ManNAc-6-P) to N-acetylglucosamine-6-phosphate (GlcNAc-6-P). The chain is Putative N-acetylmannosamine-6-phosphate 2-epimerase from Shigella flexneri serotype 5b (strain 8401).